Here is a 266-residue protein sequence, read N- to C-terminus: Ribosomal RNA small subunit methyltransferase A (266 aa).

S-adenosyl-L-methionine-binding residues include Asn16, Leu18, Gly43, Glu64, Asp89, and Asn110.

It belongs to the class I-like SAM-binding methyltransferase superfamily. rRNA adenine N(6)-methyltransferase family. RsmA subfamily.

It is found in the cytoplasm. It carries out the reaction adenosine(1518)/adenosine(1519) in 16S rRNA + 4 S-adenosyl-L-methionine = N(6)-dimethyladenosine(1518)/N(6)-dimethyladenosine(1519) in 16S rRNA + 4 S-adenosyl-L-homocysteine + 4 H(+). In terms of biological role, specifically dimethylates two adjacent adenosines (A1518 and A1519) in the loop of a conserved hairpin near the 3'-end of 16S rRNA in the 30S particle. May play a critical role in biogenesis of 30S subunits. This is Ribosomal RNA small subunit methyltransferase A from Marinomonas sp. (strain MWYL1).